The chain runs to 90 residues: Probable small nuclear ribonucleoprotein F (90 aa).

The Sm domain maps to 7 to 80 (NPRPFLQDLV…VLYIKKADEA (74 aa)).

It belongs to the snRNP Sm proteins family. SmF/LSm6 subfamily.

It is found in the nucleus. Its subcellular location is the cytoplasm. Its function is as follows. Plays a role in pre-mRNA splicing as a core component of the spliceosomal U1, U2, U4 and U5 small nuclear ribonucleoproteins (snRNPs), the building blocks of the spliceosome. The sequence is that of Probable small nuclear ribonucleoprotein F from Neurospora crassa (strain ATCC 24698 / 74-OR23-1A / CBS 708.71 / DSM 1257 / FGSC 987).